A 49-amino-acid chain; its full sequence is MRTLVTLACSECKRRNYTTTKNKRTTPEKLSFKKYCRFCHAHTEHKETK.

This sequence belongs to the bacterial ribosomal protein bL33 family.

The protein is Large ribosomal subunit protein bL33 of Syntrophobacter fumaroxidans (strain DSM 10017 / MPOB).